The following is a 592-amino-acid chain: Aspartate--tRNA ligase (592 aa).

Glu171 contacts L-aspartate. The tract at residues 195-198 is aspartate; sequence QLFK. Arg217 lines the L-aspartate pocket. ATP contacts are provided by residues 217 to 219 and Gln226; that span reads RDE. Residue His448 coordinates L-aspartate. Residue Glu482 coordinates ATP. Arg489 provides a ligand contact to L-aspartate. 534–537 provides a ligand contact to ATP; that stretch reads GLDR.

It belongs to the class-II aminoacyl-tRNA synthetase family. Type 1 subfamily. In terms of assembly, homodimer.

The protein resides in the cytoplasm. The enzyme catalyses tRNA(Asp) + L-aspartate + ATP = L-aspartyl-tRNA(Asp) + AMP + diphosphate. Catalyzes the attachment of L-aspartate to tRNA(Asp) in a two-step reaction: L-aspartate is first activated by ATP to form Asp-AMP and then transferred to the acceptor end of tRNA(Asp). The sequence is that of Aspartate--tRNA ligase from Pseudoalteromonas translucida (strain TAC 125).